The primary structure comprises 72 residues: Probable neurotoxin pcD-996 (72 aa).

Positions 1 to 19 are cleaved as a signal peptide; the sequence is MNYLVMISFALLLVIGVES. An LCN-type CS-alpha/beta domain is found at 21 to 72; sequence RDGYFVEPDNCLVYCMPSPEICDRGCKRYGATSGFCKEFSKGENFCWCKGLR. 3 cysteine pairs are disulfide-bonded: Cys35/Cys56, Cys42/Cys66, and Cys46/Cys68. Position 72 (Arg72) is a propeptide, removed by a carboxypeptidase.

The protein belongs to the long (3 C-C) scorpion toxin superfamily. Expressed by the venom gland.

The protein resides in the secreted. This Androctonus australis (Sahara scorpion) protein is Probable neurotoxin pcD-996.